The primary structure comprises 272 residues: Alcohol dehydrogenase-related 31 kDa protein (272 aa).

Y11–L34 lines the NAD(+) pocket. S139 contributes to the substrate binding site. Y152 acts as the Proton acceptor in catalysis.

It belongs to the short-chain dehydrogenases/reductases (SDR) family.

The sequence is that of Alcohol dehydrogenase-related 31 kDa protein (Adhr) from Drosophila mauritiana (Fruit fly).